Reading from the N-terminus, the 370-residue chain is uncharacterized protein (370 aa).

This is an uncharacterized protein from Acanthamoeba polyphaga (Amoeba).